We begin with the raw amino-acid sequence, 97 residues long: Protein GLUTAMINE DUMPER 7 (97 aa).

At 1–25 the chain is on the extracellular side; sequence MSLHRDSMVPVNSRLENMDSPILSK. The chain crosses the membrane as a helical span at residues 26-46; it reads ICAWGVMLGLFALSLFAMAYA. Residues 47 to 97 are Cytoplasmic-facing; it reads CYHKQTSNSCIEEKQGKKQVLKPLDMEPKIVVIMAGNENPTFFAKPTQINA. The VIMAG motif lies at 78–82; sequence VIMAG.

This sequence belongs to the GLUTAMINE DUMPER 1 (TC 9.B.60) family. As to expression, expressed in the vascular tissues, even in the minor veins of the leaves.

The protein resides in the membrane. Functionally, probable subunit of an amino acid transporter involved in the regulation of the amino acid metabolism. Stimulates amino acid export by activating nonselective amino acid facilitators. The protein is Protein GLUTAMINE DUMPER 7 (GDU7) of Arabidopsis thaliana (Mouse-ear cress).